Here is an 81-residue protein sequence, read N- to C-terminus: uncharacterized protein (81 aa).

A signal peptide spans 1-16 (MNRLTFYGLCLSGAVG). The interval 55-81 (TIDPHHNHHDDHHDSHGHGHGKIKGHH) is disordered. Over residues 57–71 (DPHHNHHDDHHDSHG) the composition is skewed to basic and acidic residues. Basic residues predominate over residues 72 to 81 (HGHGKIKGHH).

Its subcellular location is the secreted. This is an uncharacterized protein from Dictyostelium discoideum (Social amoeba).